Here is a 518-residue protein sequence, read N- to C-terminus: Metal transporter Nramp1 (518 aa).

Transmembrane regions (helical) follow at residues 35 to 55, 68 to 88, 107 to 127, 131 to 151, 172 to 192, 218 to 238, 255 to 275, 315 to 337, 357 to 377, 382 to 402, 418 to 438, and 458 to 478; these read FLSH…PGNM, ELLW…SLSA, PVWV…ASDI, IGTG…GVLI, VVVA…MSIV, IALL…ALVL, FFLF…IAII, SATV…GTYA, LMTR…GGSS, LIVI…IPLL, IYIV…NIYF, and VLIG…VIYL.

It belongs to the NRAMP (TC 2.A.55) family.

Its subcellular location is the membrane. Functionally, probable metal transporter that may participate in the control of iron homeostasis. This is Metal transporter Nramp1 (NRAMP1) from Oryza sativa subsp. japonica (Rice).